A 590-amino-acid polypeptide reads, in one-letter code: Ovarian abundant message protein (590 aa).

The interval 1 to 71 is disordered; it reads MQGTDNAPPG…SPGQPLVEEQ (71 aa). Over residues 18-29 the composition is skewed to basic residues; it reads SPRRIRHVRRHY. A run of 27 repeats spans residues 66–71, 72–77, 78–83, 84–89, 90–95, 96–101, 102–107, 108–113, 114–119, 120–125, 126–131, 132–137, 138–143, 144–149, 150–155, 156–161, 162–167, 168–173, 174–179, 180–185, 300–305, 306–311, 312–317, 318–323, 324–329, 330–335, and 336–341. Residues 66-185 form a 20 X 6 AA tandem repeats of P-[LP]-V-[EG]-[EG]-[QR] region; that stretch reads PLVEEQPLVE…VEGQPLVEGQ (120 aa). Positions 300 to 347 are 8 X 6 AA approximate tandem repeats of P-L-A-[GV]-[AV]-[PL]; that stretch reads PLAGAPPLAGVPPLAVALPLAGAPPLAGVPPLAGAPPLAGALPRAGVL. The stretch at 342-347 is one 2-8; approximate repeat; the sequence is PRAGVL. A run of 16 repeats spans residues 348–353, 354–359, 360–365, 366–371, 372–377, 378–383, 384–389, 390–395, 396–401, 402–407, 408–413, 419–424, 425–430, 431–436, 437–442, and 443–448. The tract at residues 348–413 is 11 X 6 AA tandem repeats of approximate R-R-A-[GD]-V-[LV]; that stretch reads RRAGVLRRAG…ADVLRRADVV (66 aa). A 6 X 6 AA approximate tandem repeats of Q-[QR]-L-A-D-V region spans residues 419-454; sequence QQLADVQRLADVQRLADVQRLADVQRLADVQRLVCV. A 4-6; approximate repeat occupies 449 to 454; the sequence is QRLVCV.

As to expression, somatic ovarian tissue.

The protein is Ovarian abundant message protein (OAM) of Ascaris suum (Pig roundworm).